The primary structure comprises 267 residues: Protein I267L (267 aa).

Belongs to the asfivirus I267L family. Interacts with host RNF135.

Functionally, plays a role in the inhibition of host RNA Pol-III-RIGI-mediated innate antiviral response. Mechanistically, interacts with host E3 ubiquitin ligase RNF135, disrupting RNF135-RIGI interaction and impairing RNF135-mediated 'Lys-63'-polyubiquitination and activation of RIGI. The chain is Protein I267L from African swine fever virus (strain Badajoz 1971 Vero-adapted) (Ba71V).